The primary structure comprises 127 residues: Fluoride-specific ion channel FluC (127 aa).

The next 4 membrane-spanning stretches (helical) occupy residues Thr-4–Val-24, Leu-35–Phe-55, Thr-71–Leu-91, and Val-103–Trp-123. Na(+)-binding residues include Gly-75 and Thr-78.

It belongs to the fluoride channel Fluc/FEX (TC 1.A.43) family.

Its subcellular location is the cell inner membrane. It catalyses the reaction fluoride(in) = fluoride(out). Its activity is regulated as follows. Na(+) is not transported, but it plays an essential structural role and its presence is essential for fluoride channel function. In terms of biological role, fluoride-specific ion channel. Important for reducing fluoride concentration in the cell, thus reducing its toxicity. The chain is Fluoride-specific ion channel FluC from Pectobacterium carotovorum subsp. carotovorum (strain PC1).